A 275-amino-acid polypeptide reads, in one-letter code: Glutamate racemase (275 aa).

Substrate contacts are provided by residues 10–11 (DS) and 42–43 (YG). Cys-74 serves as the catalytic Proton donor/acceptor. 75–76 (NT) serves as a coordination point for substrate. Cys-189 acts as the Proton donor/acceptor in catalysis. A substrate-binding site is contributed by 190–191 (TH).

It belongs to the aspartate/glutamate racemases family.

It catalyses the reaction L-glutamate = D-glutamate. The protein operates within cell wall biogenesis; peptidoglycan biosynthesis. Functionally, provides the (R)-glutamate required for cell wall biosynthesis. The protein is Glutamate racemase of Bartonella tribocorum (strain CIP 105476 / IBS 506).